A 740-amino-acid chain; its full sequence is Catalase-peroxidase 2 (740 aa).

An N-terminal signal peptide occupies residues 1 to 27 (MFKKTKPRISILALTISCAIYSGAALA). Residues 106-228 (WHSAGTYRIY…LAAVQMGLIY (123 aa)) constitute a cross-link (tryptophyl-tyrosyl-methioninium (Trp-Tyr) (with M-254)). The active-site Proton acceptor is His107. A cross-link (tryptophyl-tyrosyl-methioninium (Tyr-Met) (with W-106)) is located at residues 228 to 254 (YVNPEGPNGVPDPLLAAKDIRDTFGRM). His269 is a heme b binding site.

This sequence belongs to the peroxidase family. Peroxidase/catalase subfamily. In terms of assembly, homodimer or homotetramer. Heme b serves as cofactor. In terms of processing, formation of the three residue Trp-Tyr-Met cross-link is important for the catalase, but not the peroxidase activity of the enzyme.

It carries out the reaction H2O2 + AH2 = A + 2 H2O. It catalyses the reaction 2 H2O2 = O2 + 2 H2O. In terms of biological role, bifunctional enzyme with both catalase and broad-spectrum peroxidase activity. The polypeptide is Catalase-peroxidase 2 (Cellvibrio japonicus (strain Ueda107) (Pseudomonas fluorescens subsp. cellulosa)).